The chain runs to 481 residues: ATP synthase subunit beta, chloroplastic (481 aa).

Residue 162–169 participates in ATP binding; it reads GGAGVGKT.

It belongs to the ATPase alpha/beta chains family. In terms of assembly, F-type ATPases have 2 components, CF(1) - the catalytic core - and CF(0) - the membrane proton channel. CF(1) has five subunits: alpha(3), beta(3), gamma(1), delta(1), epsilon(1). CF(0) has four main subunits: a(1), b(1), b'(1) and c(9-12).

The protein localises to the plastid. It is found in the chloroplast thylakoid membrane. The catalysed reaction is ATP + H2O + 4 H(+)(in) = ADP + phosphate + 5 H(+)(out). Produces ATP from ADP in the presence of a proton gradient across the membrane. The catalytic sites are hosted primarily by the beta subunits. The sequence is that of ATP synthase subunit beta, chloroplastic from Oltmannsiellopsis viridis (Marine flagellate).